Here is a 218-residue protein sequence, read N- to C-terminus: Redox-sensing transcriptional repressor Rex (218 aa).

Residues 18-57 (LYYRFIQSLHASGKQRVSSAELSEAVKVDSATIRRDFSYF) constitute a DNA-binding region (H-T-H motif). 92–97 (GVGHLG) serves as a coordination point for NAD(+).

It belongs to the transcriptional regulatory Rex family. Homodimer.

The protein localises to the cytoplasm. Modulates transcription in response to changes in cellular NADH/NAD(+) redox state. In Exiguobacterium sp. (strain ATCC BAA-1283 / AT1b), this protein is Redox-sensing transcriptional repressor Rex.